Here is a 526-residue protein sequence, read N- to C-terminus: Peptide chain release factor 3 (526 aa).

A tr-type G domain is found at 9–277 (DKRRTFAIIS…GIVEWAPVPQ (269 aa)). Residues 18 to 25 (SHPDAGKT), 86 to 90 (DTPGH), and 140 to 143 (NKLD) contribute to the GTP site.

The protein belongs to the TRAFAC class translation factor GTPase superfamily. Classic translation factor GTPase family. PrfC subfamily.

The protein localises to the cytoplasm. In terms of biological role, increases the formation of ribosomal termination complexes and stimulates activities of RF-1 and RF-2. It binds guanine nucleotides and has strong preference for UGA stop codons. It may interact directly with the ribosome. The stimulation of RF-1 and RF-2 is significantly reduced by GTP and GDP, but not by GMP. This is Peptide chain release factor 3 from Shewanella pealeana (strain ATCC 700345 / ANG-SQ1).